Consider the following 309-residue polypeptide: Probable lipid kinase YegS-like (309 aa).

The DAGKc domain maps to 1–134 (MAPSHWRVIL…VDLLRIDADH (134 aa)). Residues threonine 39, 65–71 (GDGTLSE), and threonine 96 each bind ATP. Residues leucine 219, aspartate 222, and leucine 224 each contribute to the Mg(2+) site. The Proton acceptor role is filled by glutamate 280.

The protein belongs to the diacylglycerol/lipid kinase family. YegS lipid kinase subfamily. Mg(2+) serves as cofactor. It depends on Ca(2+) as a cofactor.

It is found in the cytoplasm. In terms of biological role, probably phosphorylates lipids; the in vivo substrate is unknown. The sequence is that of Probable lipid kinase YegS-like from Xanthomonas euvesicatoria pv. vesicatoria (strain 85-10) (Xanthomonas campestris pv. vesicatoria).